The sequence spans 282 residues: Biotin synthase (282 aa).

A Radical SAM core domain is found at Met-1–Arg-228. [4Fe-4S] cluster-binding residues include Cys-17, Cys-21, and Cys-24. Cys-61, Cys-96, Cys-154, and Arg-221 together coordinate [2Fe-2S] cluster.

It belongs to the radical SAM superfamily. Biotin synthase family. Homodimer. [4Fe-4S] cluster serves as cofactor. Requires [2Fe-2S] cluster as cofactor.

The catalysed reaction is (4R,5S)-dethiobiotin + (sulfur carrier)-SH + 2 reduced [2Fe-2S]-[ferredoxin] + 2 S-adenosyl-L-methionine = (sulfur carrier)-H + biotin + 2 5'-deoxyadenosine + 2 L-methionine + 2 oxidized [2Fe-2S]-[ferredoxin]. The protein operates within cofactor biosynthesis; biotin biosynthesis; biotin from 7,8-diaminononanoate: step 2/2. Its function is as follows. Catalyzes the conversion of dethiobiotin (DTB) to biotin by the insertion of a sulfur atom into dethiobiotin via a radical-based mechanism. The chain is Biotin synthase from Helicobacter pylori (strain J99 / ATCC 700824) (Campylobacter pylori J99).